We begin with the raw amino-acid sequence, 447 residues long: ATP-dependent protease ATPase subunit HslU (447 aa).

ATP contacts are provided by residues isoleucine 18, 60–65, aspartate 259, glutamate 325, and arginine 397; that span reads GVGKTE.

This sequence belongs to the ClpX chaperone family. HslU subfamily. In terms of assembly, a double ring-shaped homohexamer of HslV is capped on each side by a ring-shaped HslU homohexamer. The assembly of the HslU/HslV complex is dependent on binding of ATP.

The protein localises to the cytoplasm. In terms of biological role, ATPase subunit of a proteasome-like degradation complex; this subunit has chaperone activity. The binding of ATP and its subsequent hydrolysis by HslU are essential for unfolding of protein substrates subsequently hydrolyzed by HslV. HslU recognizes the N-terminal part of its protein substrates and unfolds these before they are guided to HslV for hydrolysis. This chain is ATP-dependent protease ATPase subunit HslU, found in Burkholderia ambifaria (strain ATCC BAA-244 / DSM 16087 / CCUG 44356 / LMG 19182 / AMMD) (Burkholderia cepacia (strain AMMD)).